The sequence spans 277 residues: Cell wall protein PGA30 (277 aa).

A signal peptide spans 1–18 (MKYFTIATVLTLASSALA). 2 N-linked (GlcNAc...) asparagine glycosylation sites follow: Asn-129 and Asn-178. Residues 219–246 (VLPSSSTEAPPKTSVAAPSTTAEAQTTA) form a disordered region. The span at 234 to 246 (AAPSTTAEAQTTA) shows a compositional bias: polar residues. Gly-253 is lipidated: GPI-anchor amidated glycine. Residues 254 to 277 (GANEIVGGGSMAIALAAAAIGLVI) constitute a propeptide, removed in mature form.

The protein belongs to the SRP1/TIP1 family. The GPI-anchor is attached to the protein in the endoplasmic reticulum and serves to target the protein to the cell surface. There, the glucosamine-inositol phospholipid moiety is cleaved off and the GPI-modified mannoprotein is covalently attached via its lipidless GPI glycan remnant to the 1,6-beta-glucan of the outer cell wall layer.

It localises to the secreted. The protein localises to the cell wall. Its subcellular location is the membrane. Component of the cell wall involved in virulence which plays a role in the relationship between C.albicans and the host. This is Cell wall protein PGA30 (PGA30) from Candida albicans (strain SC5314 / ATCC MYA-2876) (Yeast).